The sequence spans 143 residues: uncharacterized protein (143 aa).

Positions 5–137 constitute an HTH marR-type domain; the sequence is DARLASDLSL…LRSAADLMLA (133 aa). Positions 51 to 74 form a DNA-binding region, H-T-H motif; it reads PGALAIRERVRPPSMTRVIASLAD.

In terms of assembly, homodimer.

This is an uncharacterized protein from Mycobacterium bovis (strain ATCC BAA-935 / AF2122/97).